A 459-amino-acid chain; its full sequence is V-type ATP synthase beta chain (459 aa).

It belongs to the ATPase alpha/beta chains family.

Functionally, produces ATP from ADP in the presence of a proton gradient across the membrane. The V-type beta chain is a regulatory subunit. The polypeptide is V-type ATP synthase beta chain (Clostridium botulinum (strain Alaska E43 / Type E3)).